The primary structure comprises 214 residues: Transcription factor MYB24 (214 aa).

2 consecutive HTH myb-type domains span residues 14–66 (DAEV…LNYL) and 67–121 (RPDV…QKYI). DNA-binding regions (H-T-H motif) lie at residues 42 to 66 (WNSLAKSAGLKRTGKSCRLRWLNYL) and 94 to 117 (WSKIAKHLPGRTDNEIKNFWRTKI).

As to quaternary structure, interacts (via N-terminus) with TIFY10A/JAZ1, TIFY5A/JAZ8 AND TIFY3A/JAZ11. As to expression, expressed specifically in flowers. Expressed in all four whorls of the flower and in the vascular tissue of stamen filament and sepals. Detected in male and female gametophytes, especially in microspores and ovules. Weakly expressed in petals and the upper part of pistils.

The protein localises to the nucleus. In terms of biological role, transcription factor acting redundantly with MYB21 and MYB57 to control stamen filament elongation in the late developed flowers. Contributes with MYB21 to induction of MYB108 by jasmonate. Repressed at the transcript levels by DELLA proteins. In Arabidopsis thaliana (Mouse-ear cress), this protein is Transcription factor MYB24 (MYB24).